The primary structure comprises 145 residues: Immune protein Tsi3 (145 aa).

The first 15 residues, 1 to 15 (MKTVALILASLALLA), serve as a signal peptide directing secretion. Residue Cys16 is the site of N-palmitoyl cysteine attachment. Cys16 carries S-diacylglycerol cysteine lipidation. The disordered stretch occupies residues 53–85 (FDEGGKLRNPRQLEVQRQDAPPPPDLASRRLGD). Ca(2+) is bound at residue Glu126.

As to quaternary structure, forms a heterotetramer with Tse3 consisting of two Tse3 dimers and two Tsi3 dimers. Formation of the complex inactivates Tse3 enzymatic activity.

Functionally, immunity protein that plays a role in preventing early activation of toxin Tse3. Occupies Tse3 substrate binding site and prevents the substrate from entering. This chain is Immune protein Tsi3, found in Pseudomonas aeruginosa (strain ATCC 15692 / DSM 22644 / CIP 104116 / JCM 14847 / LMG 12228 / 1C / PRS 101 / PAO1).